We begin with the raw amino-acid sequence, 194 residues long: Small ribosomal subunit protein uS4c (194 aa).

Residues 82–143 (MRLDNILFRL…KQRSKALIQN (62 aa)) form the S4 RNA-binding domain.

The protein belongs to the universal ribosomal protein uS4 family. In terms of assembly, part of the 30S ribosomal subunit. Contacts protein S5. The interaction surface between S4 and S5 is involved in control of translational fidelity.

The protein localises to the plastid. The protein resides in the chloroplast. In terms of biological role, one of the primary rRNA binding proteins, it binds directly to 16S rRNA where it nucleates assembly of the body of the 30S subunit. Its function is as follows. With S5 and S12 plays an important role in translational accuracy. The protein is Small ribosomal subunit protein uS4c (rps4) of Sisyrinchium striatum (Satin flower).